Reading from the N-terminus, the 1129-residue chain is Phytochrome A type 4 (1129 aa).

Residues 1–21 (MSSSRPASSSSSRNRQSSRAR) are compositionally biased toward low complexity. The segment at 1-24 (MSSSRPASSSSSRNRQSSRARVLA) is disordered. Positions 217 to 402 (SMEVLCNTVV…VFAVHVNREF (186 aa)) constitute a GAF domain. Cys-322 contacts phytochromobilin. 2 PAS domains span residues 618-688 (VTSE…LQGK) and 748-822 (VEGD…VSLC). A Histidine kinase domain is found at 902-1122 (YMRHAINNPL…TFILTAELAS (221 aa)).

It belongs to the phytochrome family. As to quaternary structure, homodimer. Contains one covalently linked phytochromobilin chromophore.

Its function is as follows. Regulatory photoreceptor which exists in two forms that are reversibly interconvertible by light: the Pr form that absorbs maximally in the red region of the spectrum and the Pfr form that absorbs maximally in the far-red region. Photoconversion of Pr to Pfr induces an array of morphogenic responses, whereas reconversion of Pfr to Pr cancels the induction of those responses. Pfr controls the expression of a number of nuclear genes including those encoding the small subunit of ribulose-bisphosphate carboxylase, chlorophyll A/B binding protein, protochlorophyllide reductase, rRNA, etc. It also controls the expression of its own gene(s) in a negative feedback fashion. In Avena sativa (Oat), this protein is Phytochrome A type 4 (PHYA4).